The following is a 552-amino-acid chain: Dihydroxy-acid dehydratase (552 aa).

Aspartate 78 is a Mg(2+) binding site. A [2Fe-2S] cluster-binding site is contributed by cysteine 119. Residues aspartate 120 and lysine 121 each contribute to the Mg(2+) site. N6-carboxylysine is present on lysine 121. Cysteine 191 contacts [2Fe-2S] cluster. Glutamate 442 contributes to the Mg(2+) binding site. Serine 468 functions as the Proton acceptor in the catalytic mechanism.

It belongs to the IlvD/Edd family. As to quaternary structure, homodimer. [2Fe-2S] cluster serves as cofactor. Requires Mg(2+) as cofactor.

It carries out the reaction (2R)-2,3-dihydroxy-3-methylbutanoate = 3-methyl-2-oxobutanoate + H2O. It catalyses the reaction (2R,3R)-2,3-dihydroxy-3-methylpentanoate = (S)-3-methyl-2-oxopentanoate + H2O. Its pathway is amino-acid biosynthesis; L-isoleucine biosynthesis; L-isoleucine from 2-oxobutanoate: step 3/4. It participates in amino-acid biosynthesis; L-valine biosynthesis; L-valine from pyruvate: step 3/4. Functions in the biosynthesis of branched-chain amino acids. Catalyzes the dehydration of (2R,3R)-2,3-dihydroxy-3-methylpentanoate (2,3-dihydroxy-3-methylvalerate) into 2-oxo-3-methylpentanoate (2-oxo-3-methylvalerate) and of (2R)-2,3-dihydroxy-3-methylbutanoate (2,3-dihydroxyisovalerate) into 2-oxo-3-methylbutanoate (2-oxoisovalerate), the penultimate precursor to L-isoleucine and L-valine, respectively. The polypeptide is Dihydroxy-acid dehydratase (Clostridium botulinum (strain Alaska E43 / Type E3)).